The chain runs to 558 residues: Arginine--tRNA ligase (558 aa).

Positions 116–126 match the 'HIGH' region motif; the sequence is ANPNGPLHVGH.

This sequence belongs to the class-I aminoacyl-tRNA synthetase family.

The protein resides in the cytoplasm. The catalysed reaction is tRNA(Arg) + L-arginine + ATP = L-arginyl-tRNA(Arg) + AMP + diphosphate. The chain is Arginine--tRNA ligase from Methanocorpusculum labreanum (strain ATCC 43576 / DSM 4855 / Z).